We begin with the raw amino-acid sequence, 264 residues long: 3-methyl-2-oxobutanoate hydroxymethyltransferase (264 aa).

Residues Asp-42 and Asp-81 each coordinate Mg(2+). 3-methyl-2-oxobutanoate is bound by residues 42-43 (DS), Asp-81, and Lys-110. Glu-112 contacts Mg(2+). The active-site Proton acceptor is Glu-179.

The protein belongs to the PanB family. In terms of assembly, homodecamer; pentamer of dimers. It depends on Mg(2+) as a cofactor.

The protein resides in the cytoplasm. The catalysed reaction is 3-methyl-2-oxobutanoate + (6R)-5,10-methylene-5,6,7,8-tetrahydrofolate + H2O = 2-dehydropantoate + (6S)-5,6,7,8-tetrahydrofolate. It participates in cofactor biosynthesis; (R)-pantothenate biosynthesis; (R)-pantoate from 3-methyl-2-oxobutanoate: step 1/2. In terms of biological role, catalyzes the reversible reaction in which hydroxymethyl group from 5,10-methylenetetrahydrofolate is transferred onto alpha-ketoisovalerate to form ketopantoate. This chain is 3-methyl-2-oxobutanoate hydroxymethyltransferase, found in Francisella tularensis subsp. tularensis (strain FSC 198).